A 327-amino-acid chain; its full sequence is uncharacterized protein (327 aa).

Disordered regions lie at residues 127–170 (LSEF…GIYR) and 298–327 (NFED…LKRR). 3 positions are modified to phosphoserine: Ser-153, Ser-154, and Ser-309. Basic residues predominate over residues 317 to 327 (YRKRKKNLKRR).

This is an uncharacterized protein from Schizosaccharomyces pombe (strain 972 / ATCC 24843) (Fission yeast).